The primary structure comprises 409 residues: Glutamate--tRNA ligase 2 (409 aa).

A 'HIGH' region motif is present at residues 9-19; sequence PSPTGNLHIGG. The short motif at 198–202 is the 'KMSKS' region element; it reads KLSKR. Lysine 201 lines the ATP pocket.

Belongs to the class-I aminoacyl-tRNA synthetase family. Glutamate--tRNA ligase type 1 subfamily. As to quaternary structure, monomer.

The protein localises to the cytoplasm. It catalyses the reaction tRNA(Glu) + L-glutamate + ATP = L-glutamyl-tRNA(Glu) + AMP + diphosphate. Catalyzes the attachment of glutamate to tRNA(Glu) in a two-step reaction: glutamate is first activated by ATP to form Glu-AMP and then transferred to the acceptor end of tRNA(Glu). The sequence is that of Glutamate--tRNA ligase 2 from Neorickettsia sennetsu (strain ATCC VR-367 / Miyayama) (Ehrlichia sennetsu).